The sequence spans 158 residues: Ribonuclease H (158 aa).

One can recognise an RNase H type-1 domain in the interval Met-5–Glu-146. 4 residues coordinate Mg(2+): Asp-14, Glu-52, Asp-74, and Asp-138.

It belongs to the RNase H family. In terms of assembly, monomer. Requires Mg(2+) as cofactor.

It is found in the cytoplasm. The catalysed reaction is Endonucleolytic cleavage to 5'-phosphomonoester.. Its function is as follows. Endonuclease that specifically degrades the RNA of RNA-DNA hybrids. In Mannheimia succiniciproducens (strain KCTC 0769BP / MBEL55E), this protein is Ribonuclease H.